The primary structure comprises 196 residues: MEKFTIYTGTTVPLMNDNIDTDQILPKQFLKLIDKKGFGKYLMYAWRYLDNQYTEDPDFVFNRPEYRKATILITGDNFGAGSSREHAAWALADYGFKVVIAGSFGDIHYNNELNNGMLPIVQPLEVRQALANLKPTDQVTVDLEQQKIFSPVGEFSFDIDGEWKHKLLNGLDDIGITLLYEDLIAEYEKNRPSYWQ.

Belongs to the LeuD family. LeuD type 1 subfamily. Heterodimer of LeuC and LeuD.

The enzyme catalyses (2R,3S)-3-isopropylmalate = (2S)-2-isopropylmalate. It participates in amino-acid biosynthesis; L-leucine biosynthesis; L-leucine from 3-methyl-2-oxobutanoate: step 2/4. Functionally, catalyzes the isomerization between 2-isopropylmalate and 3-isopropylmalate, via the formation of 2-isopropylmaleate. In Streptococcus gordonii (strain Challis / ATCC 35105 / BCRC 15272 / CH1 / DL1 / V288), this protein is 3-isopropylmalate dehydratase small subunit.